A 292-amino-acid polypeptide reads, in one-letter code: Insulin-like growth factor-binding protein 3 (292 aa).

Positions 1 to 27 (MHPARPALWAAALTALTLLRGPPVARA) are cleaved as a signal peptide. Residues 36–119 (PVVRCEPCDA…LNGRGFCANA (84 aa)) form the IGFBP N-terminal domain. 6 cysteine pairs are disulfide-bonded: Cys-40/Cys-69, Cys-43/Cys-71, Cys-51/Cys-72, Cys-60/Cys-75, Cys-83/Cys-96, and Cys-90/Cys-116. N-linked (GlcNAc...) asparagine glycans are attached at residues Asn-118, Asn-124, and Asn-137. Disordered regions lie at residues 127 to 161 (AYLP…THRV) and 191 to 211 (YESQ…ETEY). Residues 129–139 (LPSQPSPGNTT) are compositionally biased toward polar residues. Position 149 is a phosphoserine (Ser-149). Over residues 192–203 (ESQSTDTQNFSS) the composition is skewed to polar residues. An N-linked (GlcNAc...) asparagine glycan is attached at Asn-200. Phosphoserine is present on Ser-202. The 76-residue stretch at 211–286 (YGPCRREMED…DTKGKDDVHC (76 aa)) folds into the Thyroglobulin type-1 domain. Cystine bridges form between Cys-214/Cys-241, Cys-252/Cys-263, and Cys-265/Cys-286.

Interacts with XLKD1. Binds IGF2 more than IGF1. Forms a ternary complex of about 140 to 150 kDa with IGF1 or IGF2 and a 85 kDa glycoprotein (ALS). Interacts with humanin; humanin competes with importin KPNB1 for binding to IGFBP3, blocking IGFBP3 nuclear import and IGFBP3-mediated apoptosis. Interacts with TMEM219. Interacts with RXRA; this interaction modulates the transcriptional activity of RXRA. Interacts with LRP1; this interaction mediates cell growth inhibition independent of IGF1. Phosphorylated by FAM20C in the extracellular medium. Phosphorylated by CK2; resulting in decreased nuclear localization.

The protein resides in the secreted. The protein localises to the nucleus. Multifunctional protein that plays a critical role in regulating the availability of IGFs such as IGF1 and IGF2 to their receptors and thereby regulates IGF-mediated cellular processes including proliferation, differentiation, and apoptosis in a cell-type specific manner. Also exhibits IGF-independent antiproliferative and apoptotic effects mediated by its receptor TMEM219/IGFBP-3R. Inhibits the positive effect of humanin on insulin sensitivity. Promotes testicular germ cell apoptosis. Acts via LRP-1/alpha2M receptor, also known as TGF-beta type V receptor, to mediate cell growth inhibition independent of IGF1. Mechanistically, induces serine-specific dephosphorylation of IRS1 or IRS2 upon ligation to its receptor, leading to the inhibitory cascade. In the nucleus, interacts with transcription factors such as retinoid X receptor-alpha/RXRA to regulate transcriptional signaling and apoptosis. The chain is Insulin-like growth factor-binding protein 3 (Igfbp3) from Rattus norvegicus (Rat).